A 28-amino-acid polypeptide reads, in one-letter code: Cyclotide vodo I1 (28 aa).

Intrachain disulfides connect C4–C18, C8–C20, and C13–C25.

This is a cyclic peptide. In terms of processing, contains 3 disulfide bonds.

Its function is as follows. Probably participates in a plant defense mechanism. This chain is Cyclotide vodo I1, found in Viola odorata (Sweet violet).